A 98-amino-acid chain; its full sequence is NADH-ubiquinone oxidoreductase chain 4L (98 aa).

The next 3 membrane-spanning stretches (helical) occupy residues 1-21 (MAPINLNLILAFSLALLGVLI), 28-48 (STLLCLEGMMLSLFILMTLLI), and 59-79 (APLILLVFSACEAGVGLALLV).

The protein belongs to the complex I subunit 4L family. In terms of assembly, core subunit of respiratory chain NADH dehydrogenase (Complex I) which is composed of 45 different subunits.

The protein localises to the mitochondrion inner membrane. It carries out the reaction a ubiquinone + NADH + 5 H(+)(in) = a ubiquinol + NAD(+) + 4 H(+)(out). Functionally, core subunit of the mitochondrial membrane respiratory chain NADH dehydrogenase (Complex I) which catalyzes electron transfer from NADH through the respiratory chain, using ubiquinone as an electron acceptor. Part of the enzyme membrane arm which is embedded in the lipid bilayer and involved in proton translocation. This Isoodon macrourus (Short-nosed bandicoot) protein is NADH-ubiquinone oxidoreductase chain 4L (MT-ND4L).